Consider the following 266-residue polypeptide: Glucosamine-6-phosphate deaminase (266 aa).

Residue aspartate 67 is the Proton acceptor; for enolization step of the active site. Asparagine 139 functions as the For ring-opening step in the catalytic mechanism. Residue histidine 141 is the Proton acceptor; for ring-opening step of the active site. Glutamate 146 acts as the For ring-opening step in catalysis.

Belongs to the glucosamine/galactosamine-6-phosphate isomerase family. NagB subfamily. As to quaternary structure, homohexamer.

The catalysed reaction is alpha-D-glucosamine 6-phosphate + H2O = beta-D-fructose 6-phosphate + NH4(+). It participates in amino-sugar metabolism; N-acetylneuraminate degradation; D-fructose 6-phosphate from N-acetylneuraminate: step 5/5. Its function is as follows. Catalyzes the reversible isomerization-deamination of glucosamine 6-phosphate (GlcN6P) to form fructose 6-phosphate (Fru6P) and ammonium ion. In Marinomonas sp. (strain MWYL1), this protein is Glucosamine-6-phosphate deaminase.